A 337-amino-acid chain; its full sequence is Glyceraldehyde-3-phosphate dehydrogenase 1, cytosolic (337 aa).

Positions 1-151 (MGKIKIGING…YTSDVNIVSN (151 aa)) are binding to NAD. Residues 13–14 (RI), aspartate 35, and arginine 82 contribute to the NAD(+) site. The catalytic stretch occupies residues 152-337 (ASCTTNCLAP…DLIRHMFKTQ (186 aa)). Residues 153 to 155 (SCT), threonine 184, 213 to 214 (TG), and arginine 236 each bind D-glyceraldehyde 3-phosphate. Cysteine 154 acts as the Nucleophile in catalysis. NAD(+) is bound at residue asparagine 318.

This sequence belongs to the glyceraldehyde-3-phosphate dehydrogenase family. In terms of assembly, homotetramer.

Its subcellular location is the cytoplasm. It carries out the reaction D-glyceraldehyde 3-phosphate + phosphate + NAD(+) = (2R)-3-phospho-glyceroyl phosphate + NADH + H(+). Its pathway is carbohydrate degradation; glycolysis; pyruvate from D-glyceraldehyde 3-phosphate: step 1/5. Functionally, key enzyme in glycolysis that catalyzes the first step of the pathway by converting D-glyceraldehyde 3-phosphate (G3P) into 3-phospho-D-glyceroyl phosphate. Essential for the maintenance of cellular ATP levels and carbohydrate metabolism. In Zea mays (Maize), this protein is Glyceraldehyde-3-phosphate dehydrogenase 1, cytosolic (GAPC1).